A 510-amino-acid chain; its full sequence is GMP synthase [glutamine-hydrolyzing] (510 aa).

Residues 5-195 form the Glutamine amidotransferase type-1 domain; that stretch reads LVLVVDFGGQ…LFNVCNLKGD (191 aa). Catalysis depends on cysteine 82, which acts as the Nucleophile. Active-site residues include histidine 169 and glutamate 171. Positions 196–385 constitute a GMPS ATP-PPase domain; the sequence is WSMSSFAEQQ…LGIPHKLVWR (190 aa). 223–229 contacts ATP; it reads SGGVDSS.

In terms of assembly, homodimer.

It carries out the reaction XMP + L-glutamine + ATP + H2O = GMP + L-glutamate + AMP + diphosphate + 2 H(+). It participates in purine metabolism; GMP biosynthesis; GMP from XMP (L-Gln route): step 1/1. In terms of biological role, catalyzes the synthesis of GMP from XMP. The chain is GMP synthase [glutamine-hydrolyzing] from Clostridium botulinum (strain Loch Maree / Type A3).